Here is a 444-residue protein sequence, read N- to C-terminus: N-succinylarginine dihydrolase (444 aa).

Substrate-binding positions include 19-28, N110, and 137-138; these read AGLSFGNVAS and HR. Residue E174 is part of the active site. R214 contacts substrate. H250 is a catalytic residue. Residues D252 and N362 each contribute to the substrate site. Residue C368 is the Nucleophile of the active site.

The protein belongs to the succinylarginine dihydrolase family. Homodimer.

The enzyme catalyses N(2)-succinyl-L-arginine + 2 H2O + 2 H(+) = N(2)-succinyl-L-ornithine + 2 NH4(+) + CO2. It participates in amino-acid degradation; L-arginine degradation via AST pathway; L-glutamate and succinate from L-arginine: step 2/5. In terms of biological role, catalyzes the hydrolysis of N(2)-succinylarginine into N(2)-succinylornithine, ammonia and CO(2). In Shewanella denitrificans (strain OS217 / ATCC BAA-1090 / DSM 15013), this protein is N-succinylarginine dihydrolase.